The chain runs to 379 residues: Leukocyte elastase inhibitor A (379 aa).

Position 300 is a phosphoserine (serine 300).

It belongs to the serpin family. Ov-serpin subfamily. As to quaternary structure, monomer.

Its subcellular location is the secreted. The protein resides in the cytoplasm. The protein localises to the cytolytic granule. It localises to the early endosome. Functionally, regulates the activity of the neutrophil proteases. The sequence is that of Leukocyte elastase inhibitor A (Serpinb1a) from Rattus norvegicus (Rat).